An 82-amino-acid polypeptide reads, in one-letter code: MTRILLLLLRFYQYFISPLLGNNCRFHPTCSEYAKEAITTHGTLKGLWLTFKRIIKCQPFCNGGYDAVPLSIKNSKLFNKKI.

This sequence belongs to the UPF0161 family.

The protein localises to the cell inner membrane. In terms of biological role, could be involved in insertion of integral membrane proteins into the membrane. This chain is Putative membrane protein insertion efficiency factor, found in Rickettsia felis (strain ATCC VR-1525 / URRWXCal2) (Rickettsia azadi).